The primary structure comprises 334 residues: Phosphate acyltransferase (334 aa).

This sequence belongs to the PlsX family. Homodimer. Probably interacts with PlsY.

It is found in the cytoplasm. The catalysed reaction is a fatty acyl-[ACP] + phosphate = an acyl phosphate + holo-[ACP]. The protein operates within lipid metabolism; phospholipid metabolism. Functionally, catalyzes the reversible formation of acyl-phosphate (acyl-PO(4)) from acyl-[acyl-carrier-protein] (acyl-ACP). This enzyme utilizes acyl-ACP as fatty acyl donor, but not acyl-CoA. This Caldicellulosiruptor saccharolyticus (strain ATCC 43494 / DSM 8903 / Tp8T 6331) protein is Phosphate acyltransferase.